The primary structure comprises 299 residues: Protein U23 (299 aa).

The signal sequence occupies residues 1–27 (MRKSEFNAKSCFLMIGICVFNLNSSSC). A helical transmembrane segment spans residues 247 to 267 (LVIWICGISFVGAFIIVIVIL).

The protein resides in the host membrane. This chain is Protein U23 (U23), found in Human herpesvirus 6B (strain Z29) (HHV-6 variant B).